The primary structure comprises 381 residues: Alkanesulfonate monooxygenase (381 aa).

It belongs to the SsuD family. Homotetramer.

It catalyses the reaction an alkanesulfonate + FMNH2 + O2 = an aldehyde + FMN + sulfite + H2O + 2 H(+). In terms of biological role, catalyzes the desulfonation of aliphatic sulfonates. In Shigella flexneri serotype 5b (strain 8401), this protein is Alkanesulfonate monooxygenase.